The primary structure comprises 211 residues: Agamous-like MADS-box protein AGL12 (211 aa).

The region spanning 3 to 57 (RGKIQLKRIENPVHRQVTFCKRRTGLLKKAKELSVLCDAEIGVVIFSPQGKLFEL) is the MADS-box domain. Residues 95-185 (NLDPKDEINV…LEKIEENNNS (91 aa)) form the K-box domain.

In terms of tissue distribution, preferentially expressed in roots. In root meristem, expressed in external cells of columella, lateral root cap and atrichoblasts. In mature root, expressed in the central cylinder. Expressed in leaf vasculature, young floral meristems and nectaries.

The protein localises to the nucleus. Functionally, probable transcription activator that regulates root development by controlling cell proliferation in root meristem. May mediate responses to auxin in the root. May act as promoter of the flowering transition through up-regulation of SOC, FT and LFY. This Arabidopsis thaliana (Mouse-ear cress) protein is Agamous-like MADS-box protein AGL12.